The following is a 417-amino-acid chain: Serine hydroxymethyltransferase (417 aa).

(6S)-5,6,7,8-tetrahydrofolate contacts are provided by residues Leu122 and 126–128 (GHL). Lys230 bears the N6-(pyridoxal phosphate)lysine mark. (6S)-5,6,7,8-tetrahydrofolate is bound at residue 355-357 (SPF).

Belongs to the SHMT family. As to quaternary structure, homodimer. It depends on pyridoxal 5'-phosphate as a cofactor.

It localises to the cytoplasm. The catalysed reaction is (6R)-5,10-methylene-5,6,7,8-tetrahydrofolate + glycine + H2O = (6S)-5,6,7,8-tetrahydrofolate + L-serine. Its pathway is one-carbon metabolism; tetrahydrofolate interconversion. It functions in the pathway amino-acid biosynthesis; glycine biosynthesis; glycine from L-serine: step 1/1. Its function is as follows. Catalyzes the reversible interconversion of serine and glycine with tetrahydrofolate (THF) serving as the one-carbon carrier. This reaction serves as the major source of one-carbon groups required for the biosynthesis of purines, thymidylate, methionine, and other important biomolecules. Also exhibits THF-independent aldolase activity toward beta-hydroxyamino acids, producing glycine and aldehydes, via a retro-aldol mechanism. The sequence is that of Serine hydroxymethyltransferase from Francisella tularensis subsp. tularensis (strain FSC 198).